Here is a 568-residue protein sequence, read N- to C-terminus: Dihydroxy-acid dehydratase 1 (568 aa).

A disordered region spans residues 1 to 22; the sequence is MAEQTNTPDLKPRSRDVTDGLE. Positions 10–22 are enriched in basic and acidic residues; it reads LKPRSRDVTDGLE. C57 contributes to the [2Fe-2S] cluster binding site. Residue D89 participates in Mg(2+) binding. C130 lines the [2Fe-2S] cluster pocket. The Mg(2+) site is built by D131 and K132. K132 carries the N6-carboxylysine modification. C207 serves as a coordination point for [2Fe-2S] cluster. A Mg(2+)-binding site is contributed by E458. S484 functions as the Proton acceptor in the catalytic mechanism.

Belongs to the IlvD/Edd family. As to quaternary structure, homodimer. It depends on [2Fe-2S] cluster as a cofactor. The cofactor is Mg(2+).

The enzyme catalyses (2R)-2,3-dihydroxy-3-methylbutanoate = 3-methyl-2-oxobutanoate + H2O. The catalysed reaction is (2R,3R)-2,3-dihydroxy-3-methylpentanoate = (S)-3-methyl-2-oxopentanoate + H2O. It participates in amino-acid biosynthesis; L-isoleucine biosynthesis; L-isoleucine from 2-oxobutanoate: step 3/4. Its pathway is amino-acid biosynthesis; L-valine biosynthesis; L-valine from pyruvate: step 3/4. Functions in the biosynthesis of branched-chain amino acids. Catalyzes the dehydration of (2R,3R)-2,3-dihydroxy-3-methylpentanoate (2,3-dihydroxy-3-methylvalerate) into 2-oxo-3-methylpentanoate (2-oxo-3-methylvalerate) and of (2R)-2,3-dihydroxy-3-methylbutanoate (2,3-dihydroxyisovalerate) into 2-oxo-3-methylbutanoate (2-oxoisovalerate), the penultimate precursor to L-isoleucine and L-valine, respectively. The sequence is that of Dihydroxy-acid dehydratase 1 from Nocardia farcinica (strain IFM 10152).